A 695-amino-acid polypeptide reads, in one-letter code: Amphiphysin (695 aa).

Coiled-coil stretches lie at residues 10-83 (AKNV…SLHE) and 144-191 (DYDS…QEEL). The BAR domain maps to 24-240 (VLQKLGKADE…MTKLGDQHAD (217 aa)). 2 disordered regions span residues 244–312 (TIQG…VTPT) and 486–617 (GAPG…EASQ). Serine 252 is modified (phosphoserine). Threonine 260 bears the Phosphothreonine mark. Residues 261–274 (PSPPEEPSPLPSPT) are compositionally biased toward pro residues. Phosphoserine is present on residues serine 262, serine 268, serine 272, and serine 276. Threonine 280 carries the phosphothreonine modification. Phosphoserine occurs at positions 506 and 638. One can recognise an SH3 domain in the interval 622–695 (GFLYKVETLH…FPENFTRRLD (74 aa)).

Heterodimer with BIN1. Binds SH3GLB1. Interacts with REPS1 and SGIP1. Binds AP2A2. Interacts with AP2B1. Interacts with DNM1 and SYNJ1. Neurons, certain endocrine cell types and spermatocytes.

Its subcellular location is the cytoplasmic vesicle. It localises to the secretory vesicle. The protein resides in the synaptic vesicle membrane. The protein localises to the cytoplasm. It is found in the cytoskeleton. May participate in mechanisms of regulated exocytosis in synapses and certain endocrine cell types. May control the properties of the membrane associated cytoskeleton. The polypeptide is Amphiphysin (AMPH) (Homo sapiens (Human)).